A 1132-amino-acid polypeptide reads, in one-letter code: Cytospin-A (1132 aa).

Residues 1–166 form a disordered region; that stretch reads MKKAGRPVGN…SKSDGQLSDK (166 aa). 2 stretches are compositionally biased toward low complexity: residues 73 to 109 and 119 to 129; these read STHSTSCGTNTNNPDTKTKTTSGPSGKRTTSMTSKES and SRNSSSKKQSS. The span at 150-159 shows a compositional bias: basic and acidic residues; it reads SESRMSKSKS. Residues 226-268 adopt a coiled-coil conformation; sequence DVESTLLLLQEQNQAIRGELNLLKNENRMLKDRLNALGFSLEQ. Positions 301-381 are disordered; sequence ASSVEGSAPG…RKGSSGNTSE (81 aa). Polar residues predominate over residues 333–343; that stretch reads SEVYQAVTSSD. A compositionally biased stretch (low complexity) spans 348–377; the sequence is APSGCGSSSSSESEGGPPACRSSSRKGSSG. Coiled-coil stretches lie at residues 385 to 440 and 478 to 798; these read ACLT…MDSL and RYME…RGRV. 2 disordered regions span residues 869 to 895 and 939 to 1016; these read TSTTPTAPLPRTPLSPSPMKTPPAAAV and SRPA…RKDP. A compositionally biased stretch (pro residues) spans 875–889; that stretch reads APLPRTPLSPSPMKT. Positions 946–961 are enriched in polar residues; that stretch reads QRVSNMDTSKTITVSR. A compositionally biased stretch (basic and acidic residues) spans 962–972; sequence RSSEEPKRDIS. Residues 979–1000 show a composition bias toward low complexity; sequence ASSLISMSSAAALSSSSSPTAS. The Calponin-homology (CH) domain occupies 1026 to 1131; sequence GSKRNALLRW…YVTSIYKYFE (106 aa).

The protein belongs to the cytospin-A family. May interact with both microtubules and actin cytoskeleton.

It localises to the cytoplasm. The protein resides in the cytoskeleton. The protein localises to the spindle. It is found in the cell junction. Its subcellular location is the gap junction. Functionally, involved in cytokinesis and spindle organization. May play a role in actin cytoskeleton organization and microtubule stabilization and hence required for proper cell adhesion and migration. The protein is Cytospin-A (specc1la) of Danio rerio (Zebrafish).